The sequence spans 447 residues: GTPase Der (447 aa).

EngA-type G domains lie at 3-167 and 181-354; these read PVIA…VQER and VKIA…AAAM. Residues 9-16, 56-60, 119-122, 187-194, 234-238, and 299-302 each bind GTP; these read GRPNVGKS, DTGGF, NKAE, DTAGL, and NKWD. The region spanning 355–439 is the KH-like domain; it reads IKLPTPQITR…PLRIEFRTNK (85 aa).

It belongs to the TRAFAC class TrmE-Era-EngA-EngB-Septin-like GTPase superfamily. EngA (Der) GTPase family. As to quaternary structure, associates with the 50S ribosomal subunit.

Functionally, GTPase that plays an essential role in the late steps of ribosome biogenesis. In Cupriavidus metallidurans (strain ATCC 43123 / DSM 2839 / NBRC 102507 / CH34) (Ralstonia metallidurans), this protein is GTPase Der.